The sequence spans 316 residues: Ribosomal protein L11 methyltransferase (316 aa).

S-adenosyl-L-methionine is bound by residues threonine 162, glycine 183, aspartate 205, and asparagine 248.

This sequence belongs to the methyltransferase superfamily. PrmA family.

It localises to the cytoplasm. It catalyses the reaction L-lysyl-[protein] + 3 S-adenosyl-L-methionine = N(6),N(6),N(6)-trimethyl-L-lysyl-[protein] + 3 S-adenosyl-L-homocysteine + 3 H(+). Functionally, methylates ribosomal protein L11. The protein is Ribosomal protein L11 methyltransferase of Levilactobacillus brevis (strain ATCC 367 / BCRC 12310 / CIP 105137 / JCM 1170 / LMG 11437 / NCIMB 947 / NCTC 947) (Lactobacillus brevis).